Here is a 149-residue protein sequence, read N- to C-terminus: Calmodulin-like protein 3 (149 aa).

EF-hand domains follow at residues 8 to 43, 44 to 79, 81 to 116, and 117 to 149; these read EQVT…LGQN, PTEA…KMKD, DNEE…LGEK, and LSDE…LVSK. Ca(2+) is bound by residues Asp-21, Asp-23, Asp-25, Cys-27, Glu-32, Asp-57, Asp-59, Asn-61, Thr-63, Glu-68, Asp-94, Asp-96, Asn-98, Glu-105, Asp-130, Asp-132, Asp-134, Gln-136, and Glu-141.

This sequence belongs to the calmodulin family. Interacts with MYO10, the interaction is calcium-dependent and essential for MYO10 function in filopodial extension. Expressed in normal mammary, prostate, cervical, and epidermal tissues. It is greatly reduced or undetectable in transformed cells.

May function as a specific light chain of unconventional myosin-10 (MYO10), also enhances MYO10 translation, possibly by acting as a chaperone for the emerging MYO10 heavy chain protein. May compete with calmodulin by binding, with different affinities, to cellular substrates. This is Calmodulin-like protein 3 (CALML3) from Homo sapiens (Human).